Reading from the N-terminus, the 234-residue chain is Ribose-5-phosphate isomerase A (234 aa).

Residues 34-37 (TGST), 90-93 (DGAD), and 103-106 (KGGG) contribute to the substrate site. E112 serves as the catalytic Proton acceptor. A substrate-binding site is contributed by K130.

It belongs to the ribose 5-phosphate isomerase family. As to quaternary structure, homodimer.

It carries out the reaction aldehydo-D-ribose 5-phosphate = D-ribulose 5-phosphate. Its pathway is carbohydrate degradation; pentose phosphate pathway; D-ribose 5-phosphate from D-ribulose 5-phosphate (non-oxidative stage): step 1/1. Functionally, catalyzes the reversible conversion of ribose-5-phosphate to ribulose 5-phosphate. This chain is Ribose-5-phosphate isomerase A, found in Methanosarcina acetivorans (strain ATCC 35395 / DSM 2834 / JCM 12185 / C2A).